Here is a 103-residue protein sequence, read N- to C-terminus: Histone H4 (103 aa).

The span at 1 to 14 shows a compositional bias: gly residues; the sequence is MSGRGKGGKGLGKG. The tract at residues 1-20 is disordered; it reads MSGRGKGGKGLGKGGAKRHR. An N-acetylserine modification is found at S2. K6 and K13 each carry N6-acetyl-N6-methyllysine; alternate. The residue at position 17 (K17) is an N6-acetyllysine. A DNA-binding region spans residues 17-21; that stretch reads KRHRK. At K21 the chain carries N6-methyllysine.

It belongs to the histone H4 family. In terms of assembly, the nucleosome is a histone octamer containing two molecules each of H2A, H2B, H3 and H4 assembled in one H3-H4 heterotetramer and two H2A-H2B heterodimers. The octamer wraps approximately 147 bp of DNA.

Its subcellular location is the nucleus. It is found in the chromosome. Core component of nucleosome. Nucleosomes wrap and compact DNA into chromatin, limiting DNA accessibility to the cellular machineries which require DNA as a template. Histones thereby play a central role in transcription regulation, DNA repair, DNA replication and chromosomal stability. DNA accessibility is regulated via a complex set of post-translational modifications of histones, also called histone code, and nucleosome remodeling. The polypeptide is Histone H4 (Ascaris suum (Pig roundworm)).